The sequence spans 115 residues: U3-lycotoxin-Ls1u (115 aa).

A signal peptide spans 1 to 20 (MKFVLLFGVLLVTLFSYSSA). Positions 21–44 (EMLDDFDQADEDELLSLIEKEEAR) are excised as a propeptide. Disulfide bonds link Cys48/Cys63, Cys55/Cys72, and Cys62/Cys87.

This sequence belongs to the neurotoxin 19 (CSTX) family. 01 subfamily. In terms of tissue distribution, expressed by the venom gland.

Its subcellular location is the secreted. The polypeptide is U3-lycotoxin-Ls1u (Lycosa singoriensis (Wolf spider)).